Reading from the N-terminus, the 167-residue chain is Large ribosomal subunit protein uL10 (167 aa).

The protein belongs to the universal ribosomal protein uL10 family. As to quaternary structure, part of the ribosomal stalk of the 50S ribosomal subunit. The N-terminus interacts with L11 and the large rRNA to form the base of the stalk. The C-terminus forms an elongated spine to which L12 dimers bind in a sequential fashion forming a multimeric L10(L12)X complex.

In terms of biological role, forms part of the ribosomal stalk, playing a central role in the interaction of the ribosome with GTP-bound translation factors. In Erwinia tasmaniensis (strain DSM 17950 / CFBP 7177 / CIP 109463 / NCPPB 4357 / Et1/99), this protein is Large ribosomal subunit protein uL10.